A 365-amino-acid polypeptide reads, in one-letter code: Spermine synthase (365 aa).

Ala2 carries the post-translational modification N-acetylalanine. A Phosphoserine modification is found at Ser57. Residues 121–361 (RYWPTADGRL…ELWVFYTVWK (241 aa)) enclose the PABS domain. S-adenosyl 3-(methylsulfanyl)propylamine is bound at residue Gln147. Residues Tyr176 and Asp200 each contribute to the spermidine site. Residues Glu219 and 254–255 (DC) each bind S-adenosyl 3-(methylsulfanyl)propylamine. The active-site Proton acceptor is the Asp275. Tyr350 and Glu352 together coordinate spermidine.

This sequence belongs to the spermidine/spermine synthase family. Homodimer. Dimerization is mediated through the N-terminal domain and seems to be required for activity as deletion of the N-terminal domain causes complete loss of activity.

It catalyses the reaction S-adenosyl 3-(methylsulfanyl)propylamine + spermidine = spermine + S-methyl-5'-thioadenosine + H(+). Its pathway is amine and polyamine biosynthesis; spermine biosynthesis; spermine from spermidine: step 1/1. Catalyzes the production of spermine from spermidine and decarboxylated S-adenosylmethionine (dcSAM). This Bos taurus (Bovine) protein is Spermine synthase (SMS).